Reading from the N-terminus, the 428-residue chain is Septin homolog spn7 (428 aa).

Positions 15–290 (KGKKLRIMVA…ENYRTEKLSN (276 aa)) constitute a Septin-type G domain. The tract at residues 25 to 32 (GSSYTSYQ) is G1 motif. GTP-binding positions include 25 to 32 (GSSYTSYQ), Gly-86, 166 to 174 (NSNAFTEEE), and Gly-224. The interval 83 to 86 (EVNG) is G3 motif. The interval 165 to 168 (GNSN) is G4 motif. Disordered stretches follow at residues 287–345 (KLSN…SEEL) and 387–414 (KEFPHRTTSSRNSLPNNTTKELEMKKMD). The segment covering 290–307 (NDSPSNTSLSLQKQNSIV) has biased composition (polar residues). Over residues 309–325 (NEDKRSVNGSERTETRS) the composition is skewed to basic and acidic residues. Composition is skewed to polar residues over residues 326-339 (SIDQSEMRTNVSDS) and 392-405 (RTTSSRNSLPNNTT).

The protein belongs to the TRAFAC class TrmE-Era-EngA-EngB-Septin-like GTPase superfamily. Septin GTPase family. As to quaternary structure, component of the sporulation-specific septin complex composed of at least spn2, spn5, spn6 and spn7.

The protein resides in the cytoplasm. It is found in the nucleus. It localises to the forespore membrane. In terms of biological role, septin-like protein involved in the correct orientation of forespore membrane extension during sporulation. Binds phosphatidylinositol 4-phosphate. The polypeptide is Septin homolog spn7 (spn7) (Schizosaccharomyces pombe (strain 972 / ATCC 24843) (Fission yeast)).